The chain runs to 41 residues: Putative toxic protein TimP (41 aa).

A transmembrane helix spans residues 1 to 17; it reads MKIRCFCIVLIVSGALL.

This sequence belongs to the TimP toxin family.

Its subcellular location is the cell inner membrane. Functionally, putative toxic component of a potential type I toxin-antitoxin (TA) system. Neutralized by sRNA antitoxin TimR which binds to the 5' UTR of timP mRNA and inhibits translation. The antitoxin gene is encoded immediately upstream and transcribed divergently from the toxin gene; antitoxin RNA is less stable than timP mRNA. This is Putative toxic protein TimP from Escherichia coli (strain K12).